The sequence spans 230 residues: Cutinase 1 (230 aa).

Residues 1–16 (MKFFALTTLLAATASA) form the signal peptide. The propeptide occupies 17–31 (LPTSNPAQELEARQL). N-D-glucuronoyl glycine is present on Gly-32. Cys-47 and Cys-125 are disulfide-bonded. Catalysis depends on Ser-136, which acts as the Nucleophile. Cys-187 and Cys-194 form a disulfide bridge. The active site involves Asp-191. The Proton donor/acceptor role is filled by His-204.

Belongs to the cutinase family. The 2 disulfide bonds play a critical role in holding the catalytic residues in juxta-position; reduction of the disulfide bridges results in the complete inactivation of the enzyme. In terms of processing, O-glycosylated; contains one mole each of mannose, arabinose, N-acetylglucosamine, and glucuronic acid.

The protein localises to the secreted. It catalyses the reaction cutin + H2O = cutin monomers.. Its activity is regulated as follows. Inhibited by n-undecyl phosphonate (C11Y4). Inhibited by paraoxon. Its function is as follows. Catalyzes the hydrolysis of complex carboxylic polyesters found in the cell wall of plants. Degrades cutin, a macromolecule that forms the structure of the plant cuticle. Allows pathogenic fungi to penetrate through the cuticular barrier into the host plant during the initial stage of fungal infection. The protein is Cutinase 1 (CUT1) of Fusarium vanettenii (Neocosmospora pisi).